Here is a 763-residue protein sequence, read N- to C-terminus: Phosphoglycerol transferase I (763 aa).

4 helical membrane-spanning segments follow: residues 4 to 19 (LLSVALFLASVLIYAW), 26 to 48 (WWFAATLTVLGLFVILNITLYAS), 76 to 98 (YILPGIGIALALVAVFGALGWVL), and 110 to 132 (YSLLALLLALGSVDASPAFRQIT).

The protein belongs to the OpgB family.

It localises to the cell inner membrane. It carries out the reaction a phosphatidylglycerol + a membrane-derived-oligosaccharide D-glucose = a 1,2-diacyl-sn-glycerol + a membrane-derived-oligosaccharide 6-(glycerophospho)-D-glucose.. Its pathway is glycan metabolism; osmoregulated periplasmic glucan (OPG) biosynthesis. Transfers a phosphoglycerol residue from phosphatidylglycerol to the membrane-bound nascent glucan backbones. In Salmonella typhi, this protein is Phosphoglycerol transferase I.